The sequence spans 582 residues: Protein NARROW LEAF 1 (582 aa).

Disordered stretches follow at residues 1-26 and 531-582; these read MKPS…VDHQ and GMSP…DLEK. Residues 562-572 show a composition bias toward basic and acidic residues; it reads LGDREPKRLRS. Residues 567–573 carry the Nuclear localization signal motif; sequence PKRLRSD. The span at 573–582 shows a compositional bias: low complexity; that stretch reads DSGSSLDLEK.

In terms of tissue distribution, expressed in leaf sheaths, leaf blades, culms and panicles. Preferentially expressed in vascular tissues in leaves and culms.

The protein localises to the nucleus. Its subcellular location is the nucleoplasm. The protein resides in the cytoplasm. In terms of biological role, involved in the regulation of lateral leaf growth. May be involved in the regulation of basipetal polar auxin transport (PAT) and vascular patterning in leaves. Controls photosynthesis rate by regulating carboxylation efficiency and consequently photosynthesis rate. Controls panicle and spikelet numbers, and grain yield. This is Protein NARROW LEAF 1 from Oryza sativa subsp. japonica (Rice).